Consider the following 471-residue polypeptide: 3-isopropylmalate dehydratase large subunit (471 aa).

Residues Cys-347, Cys-407, and Cys-410 each coordinate [4Fe-4S] cluster.

The protein belongs to the aconitase/IPM isomerase family. LeuC type 1 subfamily. Heterodimer of LeuC and LeuD. Requires [4Fe-4S] cluster as cofactor.

It catalyses the reaction (2R,3S)-3-isopropylmalate = (2S)-2-isopropylmalate. The protein operates within amino-acid biosynthesis; L-leucine biosynthesis; L-leucine from 3-methyl-2-oxobutanoate: step 2/4. Catalyzes the isomerization between 2-isopropylmalate and 3-isopropylmalate, via the formation of 2-isopropylmaleate. The chain is 3-isopropylmalate dehydratase large subunit from Buchnera aphidicola subsp. Acyrthosiphon pisum (strain APS) (Acyrthosiphon pisum symbiotic bacterium).